We begin with the raw amino-acid sequence, 488 residues long: ATP synthase subunit beta, chloroplastic (488 aa).

170–177 is a binding site for ATP; sequence GGAGVGKT.

The protein belongs to the ATPase alpha/beta chains family. F-type ATPases have 2 components, CF(1) - the catalytic core - and CF(0) - the membrane proton channel. CF(1) has five subunits: alpha(3), beta(3), gamma(1), delta(1), epsilon(1). CF(0) has four main subunits: a(1), b(1), b'(1) and c(9-12).

It localises to the plastid. It is found in the chloroplast thylakoid membrane. The catalysed reaction is ATP + H2O + 4 H(+)(in) = ADP + phosphate + 5 H(+)(out). Produces ATP from ADP in the presence of a proton gradient across the membrane. The catalytic sites are hosted primarily by the beta subunits. This is ATP synthase subunit beta, chloroplastic from Picea abies (Norway spruce).